Consider the following 201-residue polypeptide: Small ribosomal subunit protein uS4c (201 aa).

The S4 RNA-binding domain occupies M89–K149.

It belongs to the universal ribosomal protein uS4 family. As to quaternary structure, part of the 30S ribosomal subunit. Contacts protein S5. The interaction surface between S4 and S5 is involved in control of translational fidelity.

It localises to the plastid. In terms of biological role, one of the primary rRNA binding proteins, it binds directly to 16S rRNA where it nucleates assembly of the body of the 30S subunit. Its function is as follows. With S5 and S12 plays an important role in translational accuracy. The protein is Small ribosomal subunit protein uS4c (rps4) of Cuscuta reflexa (Southern Asian dodder).